Here is a 362-residue protein sequence, read N- to C-terminus: E3 ubiquitin-protein ligase TM129 (362 aa).

At 1-6 (MDSPEV) the chain is on the lumenal side. The helical transmembrane segment at 7–27 (TFTLAYLVFAVCFVFTPNEFH) threads the bilayer. Topologically, residues 28–56 (AAGLTVQNLLSGWLGSEDAAFVPFHLRRT) are cytoplasmic. A helical membrane pass occupies residues 57–77 (AATLLCHSLLPLGYYVGMCLA). The Lumenal portion of the chain corresponds to 78 to 94 (ASEKRLHALSQAPEAWR). Residues 95 to 115 (LFLLLAVTLPSIACILIYYWS) traverse the membrane as a helical segment. Topologically, residues 116–362 (RDRWACHPLA…FCILDVCTVR (247 aa)) are cytoplasmic. Residues 285–350 (CIGCMQTRAS…ASRVPCPTCR (66 aa)) form an RING-type; degenerate zinc finger.

It belongs to the TMEM129 family. In terms of assembly, integral component of ER-resident dislocation complexes.

It is found in the endoplasmic reticulum membrane. The catalysed reaction is S-ubiquitinyl-[E2 ubiquitin-conjugating enzyme]-L-cysteine + [acceptor protein]-L-lysine = [E2 ubiquitin-conjugating enzyme]-L-cysteine + N(6)-ubiquitinyl-[acceptor protein]-L-lysine.. The protein operates within protein modification; protein ubiquitination. In terms of biological role, E3 ubiquitin-protein ligase involved in ER-associated protein degradation, preferentially associates with the E2 enzyme UBE2J2. Exploited by viral US11 proteins to mediate HLA class I proteins degradation. This chain is E3 ubiquitin-protein ligase TM129 (TMEM129), found in Homo sapiens (Human).